Here is a 596-residue protein sequence, read N- to C-terminus: Arginine--tRNA ligase (596 aa).

Positions 128-138 match the 'HIGH' region motif; the sequence is ANPTSSLHVGH.

Belongs to the class-I aminoacyl-tRNA synthetase family. In terms of assembly, monomer.

Its subcellular location is the cytoplasm. The enzyme catalyses tRNA(Arg) + L-arginine + ATP = L-arginyl-tRNA(Arg) + AMP + diphosphate. This chain is Arginine--tRNA ligase, found in Acinetobacter baumannii (strain AB307-0294).